Reading from the N-terminus, the 448-residue chain is Carbon catabolite repressor protein 4 homolog 3 (448 aa).

The segment covering 50–67 (SSTSGPSDSNPESSSNRS) has biased composition (low complexity). The tract at residues 50–92 (SSTSGPSDSNPESSSNRSYSRRWQNPLPRRQHPDQIPSSQIAR) is disordered. Glutamate 162 lines the Mg(2+) pocket.

It belongs to the CCR4/nocturin family. Component of the CCR4-NOT complex, at least composed of CRR4 and CAF1 proteins. Mg(2+) is required as a cofactor.

It is found in the nucleus. The protein localises to the cytoplasm. It catalyses the reaction Exonucleolytic cleavage of poly(A) to 5'-AMP.. Its function is as follows. Acts as a catalytic component of the CCR4-NOT core complex, which in the nucleus seems to be a general transcription factor, and in the cytoplasm the major mRNA deadenylase involved in mRNA turnover. The chain is Carbon catabolite repressor protein 4 homolog 3 (CCR4-3) from Arabidopsis thaliana (Mouse-ear cress).